Here is a 589-residue protein sequence, read N- to C-terminus: TAF5-like RNA polymerase II p300/CBP-associated factor-associated factor 65 kDa subunit 5L (589 aa).

6 WD repeats span residues 266 to 305, 340 to 379, 382 to 421, 424 to 463, 466 to 505, and 508 to 547; these read NTEQ…LKSE, GHCG…NTVL, GHAY…PLRI, GHLA…SVRL, GHRG…LFKE, and GHTD…CNTP.

Belongs to the WD repeat TAF5 family. The PCAF complex is composed of a number of TBP-associated factors (TAFS), such as TAF5, TAF5L, TAF6, TAF6L, TAF9, TAF10 and TAF12, PCAF, and also PCAF-associated factors (PAFs), such as TADA2L/ADA2, TADA3L/ADA3 and SPT3. Component of the STAGA transcription coactivator-HAT complex, at least composed of SUPT3H, GCN5L2, TAF5L, TAF6L, SUPT7L, TADA3L, TAD1L, TAF10, TAF12, TRRAP and TAF9.

The protein resides in the nucleus. Its function is as follows. Functions as a component of the PCAF complex. The PCAF complex is capable of efficiently acetylating histones in a nucleosomal context. The PCAF complex could be considered as the human version of the yeast SAGA complex. With TAF6L, acts as an epigenetic regulator essential for somatic reprogramming. Regulates target genes through H3K9ac deposition and MYC recruitment which trigger MYC regulatory network to orchestrate gene expression programs to control embryonic stem cell state. This chain is TAF5-like RNA polymerase II p300/CBP-associated factor-associated factor 65 kDa subunit 5L, found in Mus musculus (Mouse).